Reading from the N-terminus, the 244-residue chain is MPLYSEGFITVRSIPKGKSAQMSMVQSVKMVLAPPHPAARPFLIGGVAVALVGLFLSHWIVWLGVAFTLFCLFFFRDPERVPPGRTGLALAPADGHVVSVAPAVPPPELGLGDTPRWRVATFLSVLDVHVNRMPVDGTVTKIAYRPGKFVNASLDKASEDNERNALAIRMPDGRTVAVVQIAGLIARRILCDAREGDVVNAGARFGIIRFGSRTDMYLPEGVVPLVTEGQTMIGGETVIADLTP.

Ser-212 serves as the catalytic Schiff-base intermediate with substrate; via pyruvic acid. A Pyruvic acid (Ser); by autocatalysis modification is found at Ser-212.

The protein belongs to the phosphatidylserine decarboxylase family. PSD-A subfamily. In terms of assembly, heterodimer of a large membrane-associated beta subunit and a small pyruvoyl-containing alpha subunit. Requires pyruvate as cofactor. Post-translationally, is synthesized initially as an inactive proenzyme. Formation of the active enzyme involves a self-maturation process in which the active site pyruvoyl group is generated from an internal serine residue via an autocatalytic post-translational modification. Two non-identical subunits are generated from the proenzyme in this reaction, and the pyruvate is formed at the N-terminus of the alpha chain, which is derived from the carboxyl end of the proenzyme. The post-translation cleavage follows an unusual pathway, termed non-hydrolytic serinolysis, in which the side chain hydroxyl group of the serine supplies its oxygen atom to form the C-terminus of the beta chain, while the remainder of the serine residue undergoes an oxidative deamination to produce ammonia and the pyruvoyl prosthetic group on the alpha chain.

Its subcellular location is the cell membrane. The catalysed reaction is a 1,2-diacyl-sn-glycero-3-phospho-L-serine + H(+) = a 1,2-diacyl-sn-glycero-3-phosphoethanolamine + CO2. Its pathway is phospholipid metabolism; phosphatidylethanolamine biosynthesis; phosphatidylethanolamine from CDP-diacylglycerol: step 2/2. Catalyzes the formation of phosphatidylethanolamine (PtdEtn) from phosphatidylserine (PtdSer). The chain is Phosphatidylserine decarboxylase proenzyme from Granulibacter bethesdensis (strain ATCC BAA-1260 / CGDNIH1).